A 427-amino-acid chain; its full sequence is Serine--tRNA ligase (427 aa).

Residue 231–233 (TAE) coordinates L-serine. 262–264 (RSE) lines the ATP pocket. Glu-285 is a binding site for L-serine. 349–352 (EISS) contacts ATP. L-serine is bound at residue Ser-385.

This sequence belongs to the class-II aminoacyl-tRNA synthetase family. Type-1 seryl-tRNA synthetase subfamily. Homodimer. The tRNA molecule binds across the dimer.

Its subcellular location is the cytoplasm. The catalysed reaction is tRNA(Ser) + L-serine + ATP = L-seryl-tRNA(Ser) + AMP + diphosphate + H(+). It catalyses the reaction tRNA(Sec) + L-serine + ATP = L-seryl-tRNA(Sec) + AMP + diphosphate + H(+). The protein operates within aminoacyl-tRNA biosynthesis; selenocysteinyl-tRNA(Sec) biosynthesis; L-seryl-tRNA(Sec) from L-serine and tRNA(Sec): step 1/1. In terms of biological role, catalyzes the attachment of serine to tRNA(Ser). Is also able to aminoacylate tRNA(Sec) with serine, to form the misacylated tRNA L-seryl-tRNA(Sec), which will be further converted into selenocysteinyl-tRNA(Sec). The polypeptide is Serine--tRNA ligase (Rhizobium etli (strain CIAT 652)).